The following is a 257-amino-acid chain: uncharacterized protein (257 aa).

The first 22 residues, 1-22 (MIHSKRLRLWLYLVLLAVFIGA), serve as a signal peptide directing secretion. Cysteine 23 carries the N-palmitoyl cysteine lipid modification. Cysteine 23 carries S-diacylglycerol cysteine lipidation.

Belongs to the staphylococcal tandem lipoprotein family.

Its subcellular location is the cell membrane. This is an uncharacterized protein from Staphylococcus aureus (strain NCTC 8325 / PS 47).